A 408-amino-acid chain; its full sequence is NFATC2-interacting protein (408 aa).

The segment at 1-113 (MAEPVGKRGR…LDPGEAPLVP (113 aa)) is disordered. A compositionally biased stretch (low complexity) spans 24–40 (QRSPSRGTLDVVSVDLV). Phosphoserine is present on residues S41, S43, S73, S77, S79, S81, and S116. Residues K118 and K120 each participate in a glycyl lysine isopeptide (Lys-Gly) (interchain with G-Cter in SUMO2) cross-link. The interval 141 to 205 (EEEVELADSS…TKSRKHTRAL (65 aa)) is disordered. Residues 169 to 181 (RTKDKEEKKKTEI) show a composition bias toward basic and acidic residues. 3 positions are modified to phosphoserine: S187, S190, and S193. Positions 196–205 (TKSRKHTRAL) are enriched in basic residues. Residues 197–220 (KSRKHTRALKKLSEVNKRLQDLRS) are a coiled coil. Phosphoserine is present on residues S209 and S303. Phosphothreonine is present on residues T305 and T307. Residues 337–408 (LQLRVQGKEK…ESGDLIEVWG (72 aa)) form the Ubiquitin-like domain. Phosphoserine occurs at positions 358 and 379.

As to quaternary structure, interacts with NFATC2, TRAF1, TRAF2 and PRMT1. Interacts with UBE2I/UBC9. Post-translationally, methylation at the N-terminus by PRMT1 modulates interaction with the NFAT complex and results in augmented cytokine production.

It localises to the nucleus. The protein resides in the cytoplasm. In T-helper 2 (Th2) cells, regulates the magnitude of NFAT-driven transcription of a specific subset of cytokine genes, including IL3, IL4, IL5 and IL13, but not IL2. Recruits PRMT1 to the IL4 promoter; this leads to enhancement of histone H4 'Arg-3'-methylation and facilitates subsequent histone acetylation at the IL4 locus, thus promotes robust cytokine expression. Down-regulates formation of poly-SUMO chains by UBE2I/UBC9. This is NFATC2-interacting protein (NFATC2IP) from Macaca fascicularis (Crab-eating macaque).